The primary structure comprises 198 residues: MSLAVTLASTSKSRRALLAAAGVEADGVAPNVDEESFRNTMRANKLPVREQAMQLAELKAMRVSAKRPGLVIGGDQMLALGDEAFDKPADLEAAKNHLRQLSGKSHTLETAIVICEDGAPIWRHLARPKLTMRPLTEDFIETYVSSCGDALLSTVGAYQLEGPGAQLFTRIEGDYFSILGLPLLPLLDYLRIRKVLPT.

D75 acts as the Proton acceptor in catalysis.

The protein belongs to the Maf family. The cofactor is a divalent metal cation.

The protein resides in the cytoplasm. The enzyme catalyses a ribonucleoside 5'-triphosphate + H2O = a ribonucleoside 5'-phosphate + diphosphate + H(+). The catalysed reaction is a 2'-deoxyribonucleoside 5'-triphosphate + H2O = a 2'-deoxyribonucleoside 5'-phosphate + diphosphate + H(+). In terms of biological role, nucleoside triphosphate pyrophosphatase. May have a dual role in cell division arrest and in preventing the incorporation of modified nucleotides into cellular nucleic acids. The chain is Nucleoside triphosphate pyrophosphatase from Hyphomonas neptunium (strain ATCC 15444).